The following is a 362-amino-acid chain: UDP-galactose transporter homolog 1 (362 aa).

5 helical membrane-spanning segments follow: residues 7 to 27 (IFPV…WALV), 45 to 65 (CPNV…YFYM), 111 to 131 (LTYM…HLII), 141 to 161 (SVVA…GSKG), and 175 to 195 (FFQK…DGLT). N-linked (GlcNAc...) asparagine glycosylation occurs at asparagine 196. Transmembrane regions (helical) follow at residues 234 to 254 (HMMF…LLVI), 271 to 291 (IIVS…CFIF), 296 to 316 (LYGS…SMLL), and 317 to 337 (SIIV…VIVF).

Belongs to the nucleotide-sugar transporter family. SLC35B subfamily.

It is found in the endoplasmic reticulum membrane. Its function is as follows. May be involved in specific transport of UDP-Gal from the cytosol to the Golgi lumen. Involved in the maintenance of optimal conditions for the folding of secretory pathway proteins in the endoplasmic reticulum. In Candida glabrata (strain ATCC 2001 / BCRC 20586 / JCM 3761 / NBRC 0622 / NRRL Y-65 / CBS 138) (Yeast), this protein is UDP-galactose transporter homolog 1 (HUT1).